The primary structure comprises 677 residues: mRNA 3'-end-processing protein RNA14 (677 aa).

HAT repeat units lie at residues 56 to 88 (ESYAKVREVYEQFHNTFPFYSPAWTLQLKGELA), 90 to 124 (DEFETVEKILAQCLSGKLENNDLSLWSTYLDYIRR), 138 to 170 (VIVKAFQLVMQKCAIFEPKSSSFWNEYLNFLEQ), 181 to 214 (QRIDMLREFYKKMLCVPFDNLEKMWNRYTQWEQE), 257 to 289 (RTANKKNIPQPGTSDSNIQQLQIWLNWIKWERE), and 298 to 330 (MLSQRISYVYKQGIQYMIFSAEMWYDYSMYISE).

In terms of assembly, component of the CFIA complex, which is composed of RNA14, RNA15, PCF11 and CLP1. Interacts with FIP1, PFS2, YSH1 and probably also with RNA15. Probably interacts with the phosphorylated CTD domain of RPB1/RNA polymerase II.

It is found in the nucleus. It localises to the cytoplasm. Functionally, component of the cleavage factor IA (CFIA) complex, which is involved in the endonucleolytic cleavage during polyadenylation-dependent pre-mRNA 3'-end formation and cooperates with the cleavage factor NAB4/CFIB and the cleavage and polyadenylation factor (CPF) complex. This is mRNA 3'-end-processing protein RNA14 (RNA14) from Saccharomyces cerevisiae (strain ATCC 204508 / S288c) (Baker's yeast).